Here is a 141-residue protein sequence, read N- to C-terminus: ATP synthase epsilon chain (141 aa).

The protein belongs to the ATPase epsilon chain family. In terms of assembly, F-type ATPases have 2 components, CF(1) - the catalytic core - and CF(0) - the membrane proton channel. CF(1) has five subunits: alpha(3), beta(3), gamma(1), delta(1), epsilon(1). CF(0) has three main subunits: a, b and c.

It is found in the cell inner membrane. In terms of biological role, produces ATP from ADP in the presence of a proton gradient across the membrane. The sequence is that of ATP synthase epsilon chain from Pseudomonas savastanoi pv. phaseolicola (strain 1448A / Race 6) (Pseudomonas syringae pv. phaseolicola (strain 1448A / Race 6)).